Reading from the N-terminus, the 150-residue chain is Large ribosomal subunit protein bL9 (150 aa).

This sequence belongs to the bacterial ribosomal protein bL9 family.

Its function is as follows. Binds to the 23S rRNA. This is Large ribosomal subunit protein bL9 from Lactococcus lactis subsp. cremoris (strain SK11).